Here is a 438-residue protein sequence, read N- to C-terminus: Vasoactive intestinal polypeptide receptor 2 (438 aa).

The first 23 residues, 1 to 23 (MRTLLPPALLTCWLLAPVNSIHP), serve as a signal peptide directing secretion. Topologically, residues 24–124 (ECRFHLEIQE…EDESKITFYI (101 aa)) are extracellular. Disulfide bonds link C38/C61, C52/C93, and C75/C109. 3 N-linked (GlcNAc...) asparagine glycosylation sites follow: N58, N88, and N92. Residues 125 to 150 (LVKAIYTLGYSVSLMSLATGSIILCL) traverse the membrane as a helical segment. Topologically, residues 151–158 (FRKLHCTR) are cytoplasmic. The chain crosses the membrane as a helical span at residues 159–180 (NYIHLNLFLSFILRAISVLVKD). The Extracellular portion of the chain corresponds to 181–203 (DVLYSSSGTLHCPDQPSSWVGCK). A disulfide bridge links C202 with C271. Residues 204-228 (LSLVFLQYCIMANFFWLLVEGLYLH) traverse the membrane as a helical segment. Residues 229-239 (TLLVAMLPPRR) lie on the Cytoplasmic side of the membrane. The chain crosses the membrane as a helical span at residues 240–261 (CFLAYLLIGWGLPTVCIGAWTA). Over 262-280 (ARLYLEDTGCWDTNDHSVP) the chain is Extracellular. A helical membrane pass occupies residues 281 to 304 (WWVIRIPILISIIVNFVLFISIIR). The Cytoplasmic portion of the chain corresponds to 305–325 (ILLQKLTSPDVGGNDQSQYKR). Residues 326-346 (LAKSTLLLIPLFGVHYMVFAV) traverse the membrane as a helical segment. At 347–354 (FPISISSK) the chain is on the extracellular side. A helical transmembrane segment spans residues 355–378 (YQILFELCLGSFQGLVVAVLYCFL). Topologically, residues 379-438 (NSEVQCELKRKWRSRCPTPSASRDYRVCGSSFSRNGSEGALQFHRGSRAQSFLQTETSVI) are cytoplasmic.

It belongs to the G-protein coupled receptor 2 family. In terms of assembly, interacts with ADCYAP1/PACAP (via N-terminal extracellular domain); activated by PACAP27 and CAPAC38 neuropeptides. Interacts with VIP; the interaction results in VIPR1 activation. As to expression, expressed in CD4+ T-cells, but not in CD8+ T-cells. Expressed in the T-cell lines Jurkat, Peer, MOLT-4, HSB, YT and SUP-T1, but not in the T-cell lines HARRIS and HuT 78.

Its subcellular location is the cell membrane. Its function is as follows. G protein-coupled receptor activated by the neuropeptides vasoactive intestinal peptide (VIP) and pituitary adenylate cyclase-activating polypeptide (ADCYAP1/PACAP). Binds VIP and both PACAP27 and PACAP38 bioactive peptides with the following order of potency PACAP38 = VIP &gt; PACAP27. Ligand binding causes a conformation change that triggers signaling via guanine nucleotide-binding proteins (G proteins) and modulates the activity of downstream effectors. Activates cAMP-dependent pathway. May be coupled to phospholipase C. This chain is Vasoactive intestinal polypeptide receptor 2, found in Homo sapiens (Human).